The sequence spans 1165 residues: Integrin alpha-L (1165 aa).

The N-terminal stretch at 1–23 (MNSCIIVLRLLLSGPFVFAPAWS) is a signal peptide. Over 24-1084 (YNLDVRHVQN…MKVDLVYEKE (1061 aa)) the chain is Extracellular. FG-GAP repeat units follow at residues 29–80 (RHVQ…DCLP) and 81–138 (VTLS…GPVL). The N-linked (GlcNAc...) asparagine glycan is linked to Asn33. Cysteines 71 and 78 form a disulfide. Asn86 carries N-linked (GlcNAc...) asparagine glycosylation. Cys108 and Cys126 are disulfide-bonded. The VWFA domain maps to 153–324 (DLVFLFDGSM…EKLKDLFTEL (172 aa)). Asn185 carries an N-linked (GlcNAc...) asparagine glycan. FG-GAP repeat units lie at residues 335-386 (SKQD…SSTF), 387-442 (VGNE…GGPW), 443-503 (SQIQ…EFQM), 504-560 (VSEL…GLSP), and 564-624 (QRIE…FSPA). Ca(2+) contacts are provided by Asp465, Asp467, Asp469, Glu473, Asp527, Asn529, Asp531, Asp535, Asp587, Asp591, and Asp595. N-linked (GlcNAc...) asparagine glycans are attached at residues Asn646, Asn667, and Asn723. An intrachain disulfide couples Cys650 to Cys704. Cystine bridges form between Cys768-Cys774 and Cys842-Cys858. Residues Asn859, Asn894, and Asn929 are each glycosylated (N-linked (GlcNAc...) asparagine). Intrachain disulfides connect Cys994-Cys1009 and Cys1017-Cys1048. Asn1056 and Asn1067 each carry an N-linked (GlcNAc...) asparagine glycan. The chain crosses the membrane as a helical span at residues 1085–1105 (MLYLYVLSGIGGLLLLFLIFI). Residues 1106–1165 (ALYKVGFFKRNLKEKMEANVDASSEIPGEDAGQPELEKECKDPGCLEPLQKTDEDGSGGD) are Cytoplasmic-facing. Residues 1111–1115 (GFFKR) carry the GFFKR motif motif. The segment at 1123-1165 (ANVDASSEIPGEDAGQPELEKECKDPGCLEPLQKTDEDGSGGD) is disordered. A compositionally biased stretch (basic and acidic residues) spans 1140-1159 (ELEKECKDPGCLEPLQKTDE).

This sequence belongs to the integrin alpha chain family. Heterodimer of an alpha and a beta subunit. The ITGAL alpha subunit associates with the ITGB2 beta subunit. Interacts with THBD. Interacts with CD226. Post-translationally, in resting T-cells, up to 40% of surface ITGAL is constitutively phosphorylated. Phosphorylation causes conformational changes needed for ligand binding and is necessary for the activation by some physiological agents.

The protein resides in the cell membrane. Functionally, integrin ITGAL/ITGB2 is a receptor for ICAM1, ICAM2, ICAM3 and ICAM4. Integrin ITGAL/ITGB2 is a receptor for F11R. Integrin ITGAL/ITGB2 is a receptor for the secreted form of ubiquitin-like protein ISG15; the interaction is mediated by ITGAL. Involved in a variety of immune phenomena including leukocyte-endothelial cell interaction, cytotoxic T-cell mediated killing, and antibody dependent killing by granulocytes and monocytes. Contributes to natural killer cell cytotoxicity. Involved in leukocyte adhesion and transmigration of leukocytes including T-cells and neutrophils. Acts as a platform at the immunological synapse to translate TCR engagement and density of the ITGAL ligand ICAM1 into graded adhesion. Required for generation of common lymphoid progenitor cells in bone marrow, indicating the role in lymphopoiesis. Integrin ITGAL/ITGB2 in association with ICAM3, contributes to apoptotic neutrophil phagocytosis by macrophages. The chain is Integrin alpha-L from Bos taurus (Bovine).